We begin with the raw amino-acid sequence, 277 residues long: Phosphatidylglycerol--prolipoprotein diacylglyceryl transferase (277 aa).

Helical transmembrane passes span 15 to 35 (IHVR…TFMS), 50 to 70 (IDLL…YYVI), 89 to 109 (GGIA…VFCY), and 112 to 132 (FLPP…AQVL). An a 1,2-diacyl-sn-glycero-3-phospho-(1'-sn-glycerol)-binding site is contributed by Arg134. Helical transmembrane passes span 174–194 (KPTF…ILSL), 204–224 (GEVF…VEGM), and 234–254 (VIRV…ILFV).

It belongs to the Lgt family.

It localises to the cell membrane. It carries out the reaction L-cysteinyl-[prolipoprotein] + a 1,2-diacyl-sn-glycero-3-phospho-(1'-sn-glycerol) = an S-1,2-diacyl-sn-glyceryl-L-cysteinyl-[prolipoprotein] + sn-glycerol 1-phosphate + H(+). It functions in the pathway protein modification; lipoprotein biosynthesis (diacylglyceryl transfer). Its function is as follows. Catalyzes the transfer of the diacylglyceryl group from phosphatidylglycerol to the sulfhydryl group of the N-terminal cysteine of a prolipoprotein, the first step in the formation of mature lipoproteins. The chain is Phosphatidylglycerol--prolipoprotein diacylglyceryl transferase from Lactobacillus delbrueckii subsp. bulgaricus (strain ATCC 11842 / DSM 20081 / BCRC 10696 / JCM 1002 / NBRC 13953 / NCIMB 11778 / NCTC 12712 / WDCM 00102 / Lb 14).